Reading from the N-terminus, the 418-residue chain is Putative ion-transport protein YfeO (418 aa).

The next 10 helical transmembrane spans lie at 15–37, 57–79, 99–118, 149–171, 186–208, 221–243, 258–280, 301–323, 343–363, and 376–398; these read PAVAIGIASSLILIVVMKIASVL, LWIIGVLTLTGIAVGLVIRFSQG, ALPRLIVALILGLAGGVSLG, ILASAGTIGALFGTPVAAALIFS, LFAPLMAAAAGALTTGLFFHPHF, TDILSGAIVAAIAIAAGMVAVWC, VLVLGIGGFILGILGVIGGPVSL, YFLLAVIKLAALVVAAASGFRGG, VPAVPAAITVSCAILGIVLVV, and VVVPNTTLLPLLCIVMLPAWLLL.

This sequence belongs to the chloride channel (TC 2.A.49) family.

The protein resides in the cell membrane. The chain is Putative ion-transport protein YfeO (yfeO) from Shigella flexneri.